The following is a 238-amino-acid chain: Purine nucleoside phosphorylase DeoD-type (238 aa).

Histidine 5 is an a purine D-ribonucleoside binding site. Residues glycine 21, arginine 25, arginine 44, and 88-91 each bind phosphate; that span reads RIGT. Residues 180 to 182 and 204 to 205 contribute to the a purine D-ribonucleoside site; these read DME and SD. The active-site Proton donor is the aspartate 205.

It belongs to the PNP/UDP phosphorylase family. In terms of assembly, homohexamer; trimer of homodimers.

It carries out the reaction a purine D-ribonucleoside + phosphate = a purine nucleobase + alpha-D-ribose 1-phosphate. The catalysed reaction is a purine 2'-deoxy-D-ribonucleoside + phosphate = a purine nucleobase + 2-deoxy-alpha-D-ribose 1-phosphate. Its function is as follows. Catalyzes the reversible phosphorolytic breakdown of the N-glycosidic bond in the beta-(deoxy)ribonucleoside molecules, with the formation of the corresponding free purine bases and pentose-1-phosphate. The chain is Purine nucleoside phosphorylase DeoD-type from Buchnera aphidicola subsp. Baizongia pistaciae (strain Bp).